Here is a 204-residue protein sequence, read N- to C-terminus: Endothelin-3 (204 aa).

Residues 1 to 17 (MELRLWFLFGLTVTSAA) form the signal peptide. A disordered region spans residues 18 to 71 (GPVPRPQPGDAGRSGVPRAPSATKETMAMVATRGPSPRSSGQEQEPGPFGELAA). A propeptide spanning residues 18–80 (GPVPRPQPGD…AKGGPVRYRA (63 aa)) is cleaved from the precursor. 2 cysteine pairs are disulfide-bonded: C83–C97 and C85–C93. Positions 104-204 (INTPERTVPY…KSRTDKARRL (101 aa)) are excised as a propeptide. The disordered stretch occupies residues 115–140 (LSNHRGSVRGRRSAGPSPQSSQPSRG). A compositionally biased stretch (low complexity) spans 127–140 (SAGPSPQSSQPSRG). Residues 144–158 (CACAESQDRACVYFC) are endothelin-like. The interval 166–204 (GASRTPETPDKEAGKPAGRATGGLHPRRLKSRTDKARRL) is disordered.

It belongs to the endothelin/sarafotoxin family.

Its subcellular location is the secreted. Functionally, endothelins are endothelium-derived vasoconstrictor peptides. This Sus scrofa (Pig) protein is Endothelin-3 (EDN3).